Reading from the N-terminus, the 147-residue chain is Hemoglobin subunit beta (147 aa).

Residue V2 is modified to N-acetylvaline. Residues 3 to 147 (HLTPEEKSAV…VANALAHKYH (145 aa)) form the Globin domain. A Phosphothreonine modification is found at T13. At S45 the chain carries Phosphoserine. Position 60 is an N6-acetyllysine (K60). Position 64 (H64) interacts with heme b. At K83 the chain carries N6-acetyllysine. H93 provides a ligand contact to heme b. C94 is modified (S-nitrosocysteine). The residue at position 145 (K145) is an N6-acetyllysine.

This sequence belongs to the globin family. Heterotetramer of two alpha chains and two beta chains in adult hemoglobin A (HbA). Red blood cells.

Functionally, involved in oxygen transport from the lung to the various peripheral tissues. The polypeptide is Hemoglobin subunit beta (HBB) (Pan paniscus (Pygmy chimpanzee)).